A 308-amino-acid chain; its full sequence is Ribonuclease HIII (308 aa).

The 218-residue stretch at 91–308 folds into the RNase H type-2 domain; that stretch reads KNVIGSDEVG…TEKALKMVKK (218 aa). A divalent metal cation-binding residues include Asp-97, Glu-98, and Asp-202.

The protein belongs to the RNase HII family. RnhC subfamily. It depends on Mn(2+) as a cofactor. Mg(2+) is required as a cofactor.

It is found in the cytoplasm. The catalysed reaction is Endonucleolytic cleavage to 5'-phosphomonoester.. In terms of biological role, endonuclease that specifically degrades the RNA of RNA-DNA hybrids. The chain is Ribonuclease HIII from Listeria monocytogenes serovar 1/2a (strain ATCC BAA-679 / EGD-e).